Consider the following 338-residue polypeptide: uncharacterized protein (338 aa).

It belongs to the MG032/MG096/MG288 family.

This is an uncharacterized protein from Mycoplasma pneumoniae (strain ATCC 29342 / M129 / Subtype 1) (Mycoplasmoides pneumoniae).